The following is a 330-amino-acid chain: MEFYASLKSIAMHVPSERVKNAEFQQFLDTSDEWIEKRTGIKERRFASNEEKSSDLGVIAAKQAIERAHLTPKDIDLVVVATLSPDFLAMPSTACVLSAKLGIENKPAFDISAACTGFIYLLSVAKAYVESGMCENVLIVGAEKTSSVLDFKDRGTCILFGDGAGACVIGRTKRLKESILDVQISANGNFSNYLYTPRTLKPTPFNSKEEALEPFLCMKGNEVFKLAVKTLLKDVETILEKNALKPEDVRLFIPHQANFRIIQAVREHLDFKDEQVVLTVHKYGNTSAASIPMAMCEAYEEGRLKKGDLMLLDAFGGGLTWGSALVYFGG.

Residues Cys115 and His255 contribute to the active site. The interval 256-260 (QANFR) is ACP-binding. Asn285 is a catalytic residue.

Belongs to the thiolase-like superfamily. FabH family. Homodimer.

It is found in the cytoplasm. It catalyses the reaction malonyl-[ACP] + acetyl-CoA + H(+) = 3-oxobutanoyl-[ACP] + CO2 + CoA. It functions in the pathway lipid metabolism; fatty acid biosynthesis. Its function is as follows. Catalyzes the condensation reaction of fatty acid synthesis by the addition to an acyl acceptor of two carbons from malonyl-ACP. Catalyzes the first condensation reaction which initiates fatty acid synthesis and may therefore play a role in governing the total rate of fatty acid production. Possesses both acetoacetyl-ACP synthase and acetyl transacylase activities. Its substrate specificity determines the biosynthesis of branched-chain and/or straight-chain of fatty acids. The sequence is that of Beta-ketoacyl-[acyl-carrier-protein] synthase III from Helicobacter pylori (strain HPAG1).